We begin with the raw amino-acid sequence, 288 residues long: Aminoglycoside 6-adenylyltransferase (288 aa).

The enzyme catalyses streptomycin + ATP = 6-O-adenylylstreptomycin + diphosphate. Mediates bacterial resistance to streptomycin, is probably a streptomycin 6-adenylyltransferase. The chain is Aminoglycoside 6-adenylyltransferase from Campylobacter jejuni.